Here is a 374-residue protein sequence, read N- to C-terminus: Peptide chain release factor 2 (374 aa).

Q256 bears the N5-methylglutamine mark.

The protein belongs to the prokaryotic/mitochondrial release factor family. Methylated by PrmC. Methylation increases the termination efficiency of RF2.

Its subcellular location is the cytoplasm. In terms of biological role, peptide chain release factor 2 directs the termination of translation in response to the peptide chain termination codons UGA and UAA. The chain is Peptide chain release factor 2 from Mycobacterium leprae (strain Br4923).